The sequence spans 220 residues: Adapter protein MecA (220 aa).

The protein belongs to the MecA family. In terms of assembly, homodimer.

In terms of biological role, enables the recognition and targeting of unfolded and aggregated proteins to the ClpC protease or to other proteins involved in proteolysis. This chain is Adapter protein MecA, found in Macrococcus caseolyticus (strain JCSC5402) (Macrococcoides caseolyticum).